The following is a 717-amino-acid chain: Serologically defined colon cancer antigen 8 homolog (717 aa).

A phosphoserine mark is found at serine 4 and serine 28. The tract at residues 84 to 115 is disordered; it reads QTNKENETSPPRRRKLSPSRPSECDDGSMPTM. Coiled coils occupy residues 129 to 168, 221 to 278, 352 to 590, and 622 to 712; these read IHHL…KSQR, DANK…LAAS, EEAN…SEQY, and RSQI…LPSM. Positions 216-717 are sufficient for homodimerization; that stretch reads TASTGDANKW…QLPSMPQSDC (502 aa).

As to quaternary structure, homodimer. Interacts with OFD1; the interaction is direct. Interacts with FAM161A. Interacts with RABEP2, ERC1 and CEP131. Expressed in liver, kidney, spleen, brain, heart and muscle. Expressed in photoreceptor cells of the retina.

The protein resides in the cytoplasm. The protein localises to the cytoskeleton. It is found in the microtubule organizing center. Its subcellular location is the centrosome. It localises to the centriole. The protein resides in the cilium basal body. The protein localises to the cell junction. In terms of biological role, plays a role in the establishment of cell polarity and epithelial lumen formation. Also plays an essential role in ciliogenesis and subsequent Hedgehog signaling pathway that requires the presence of intact primary cilia for pathway activation. Mechanistically, interacts with and mediates RABEP2 centrosomal localization which is critical for ciliogenesis. The sequence is that of Serologically defined colon cancer antigen 8 homolog (Sdccag8) from Mus musculus (Mouse).